A 147-amino-acid polypeptide reads, in one-letter code: Protein phosphatase 1 regulatory subunit 14A (147 aa).

Positions 1–11 (MAAQRLGKRVL) are enriched in basic residues. The tract at residues 1–37 (MAAQRLGKRVLSKLQSPSRARGPGGSPSGLQKRHARV) is disordered. At Ser26 the chain carries Phosphoserine. An inhibitory region spans residues 35-120 (ARVTVKYDRR…LLAKLRGLHK (86 aa)). Thr38 is modified (phosphothreonine). The tract at residues 118 to 147 (LHKQPGFPQPSPSDDPSLSPRQDPAHTAPP) is disordered. Ser128, Ser134, and Ser136 each carry phosphoserine.

Belongs to the PP1 inhibitor family.

Its subcellular location is the cytoplasm. Functionally, inhibitor of PPP1CA. Has over 1000-fold higher inhibitory activity when phosphorylated, creating a molecular switch for regulating the phosphorylation status of PPP1CA substrates and smooth muscle contraction. The polypeptide is Protein phosphatase 1 regulatory subunit 14A (Ppp1r14a) (Rattus norvegicus (Rat)).